We begin with the raw amino-acid sequence, 449 residues long: Protein adenylyltransferase FICD (449 aa).

A helical transmembrane segment spans residues 15–35 (LLWGWGPILFGLLGSVFVLLL). TPR repeat units follow at residues 96-129 (AKAA…NPEF) and 130-163 (VEAL…SPCH). Positions 220–225 (TVAIEG) match the Inhibitory (S/T)XXXE(G/N) motif motif. ATP is bound by residues Glu-224, 250-251 (EQ), 358-360 (GNG), and Arg-364. Positions 275 to 410 (ITVNDILEIH…VRPFIRFIAK (136 aa)) constitute a Fido domain.

The protein belongs to the fic family.

The protein localises to the membrane. It catalyses the reaction L-tyrosyl-[protein] + ATP = O-(5'-adenylyl)-L-tyrosyl-[protein] + diphosphate. The catalysed reaction is L-threonyl-[protein] + ATP = 3-O-(5'-adenylyl)-L-threonyl-[protein] + diphosphate. With respect to regulation, adenylyltransferase activity is inhibited by the inhibitory helix present at the N-terminus: Glu-224 binds ATP and competes with ATP-binding at Arg-364, thereby preventing adenylyltransferase activity. Activation dissociates ATP-binding from Glu-224, allowing ordered binding of the entire ATP moiety with the alpha-phosphate in an orientation that is productive for accepting an incoming target hydroxyl side chain. Adenylyltransferase that mediates the addition of adenosine 5'-monophosphate (AMP) to specific residues of target proteins. The protein is Protein adenylyltransferase FICD (ficd) of Danio rerio (Zebrafish).